The following is a 314-amino-acid chain: Bis(5'-nucleosyl)-tetraphosphatase, symmetrical (314 aa).

A disordered region spans residues Gln-267–Gly-314. Over residues Gln-297–Gly-314 the composition is skewed to low complexity.

Belongs to the Ap4A hydrolase family.

It catalyses the reaction P(1),P(4)-bis(5'-adenosyl) tetraphosphate + H2O = 2 ADP + 2 H(+). In terms of biological role, hydrolyzes diadenosine 5',5'''-P1,P4-tetraphosphate to yield ADP. The chain is Bis(5'-nucleosyl)-tetraphosphatase, symmetrical from Xanthomonas axonopodis pv. citri (strain 306).